A 541-amino-acid chain; its full sequence is Phosphoenolpyruvate carboxykinase (ATP) (541 aa).

243–250 (GLSGTGKT) lines the ATP pocket.

This sequence belongs to the phosphoenolpyruvate carboxykinase (ATP) family.

The catalysed reaction is oxaloacetate + ATP = phosphoenolpyruvate + ADP + CO2. It participates in carbohydrate biosynthesis; gluconeogenesis. In Eremothecium gossypii (strain ATCC 10895 / CBS 109.51 / FGSC 9923 / NRRL Y-1056) (Yeast), this protein is Phosphoenolpyruvate carboxykinase (ATP) (PCK1).